The following is a 400-amino-acid chain: S-adenosylmethionine synthase (400 aa).

His15 provides a ligand contact to ATP. Asp17 is a Mg(2+) binding site. Glu43 contributes to the K(+) binding site. Residues Glu56 and Gln99 each contribute to the L-methionine site. Positions 99-109 (QSLEIGAGVDT) are flexible loop. ATP is bound by residues 174–176 (DGK), Asp254, 260–261 (RK), Ala277, and Lys281. An L-methionine-binding site is contributed by Asp254. Lys285 contributes to the L-methionine binding site.

It belongs to the AdoMet synthase family. As to quaternary structure, homotetramer; dimer of dimers. It depends on Mg(2+) as a cofactor. The cofactor is K(+).

The protein localises to the cytoplasm. It catalyses the reaction L-methionine + ATP + H2O = S-adenosyl-L-methionine + phosphate + diphosphate. Its pathway is amino-acid biosynthesis; S-adenosyl-L-methionine biosynthesis; S-adenosyl-L-methionine from L-methionine: step 1/1. Catalyzes the formation of S-adenosylmethionine (AdoMet) from methionine and ATP. The overall synthetic reaction is composed of two sequential steps, AdoMet formation and the subsequent tripolyphosphate hydrolysis which occurs prior to release of AdoMet from the enzyme. The chain is S-adenosylmethionine synthase from Corynebacterium kroppenstedtii (strain DSM 44385 / JCM 11950 / CIP 105744 / CCUG 35717).